A 357-amino-acid polypeptide reads, in one-letter code: Alanine racemase (357 aa).

The Proton acceptor; specific for D-alanine role is filled by Lys-33. An N6-(pyridoxal phosphate)lysine modification is found at Lys-33. Arg-129 contacts substrate. The active-site Proton acceptor; specific for L-alanine is the Tyr-253. Met-301 is a substrate binding site.

Belongs to the alanine racemase family. Requires pyridoxal 5'-phosphate as cofactor.

It catalyses the reaction L-alanine = D-alanine. It functions in the pathway amino-acid biosynthesis; D-alanine biosynthesis; D-alanine from L-alanine: step 1/1. Its function is as follows. Catalyzes the interconversion of L-alanine and D-alanine. May also act on other amino acids. The sequence is that of Alanine racemase (alr) from Pseudomonas syringae pv. syringae (strain B728a).